We begin with the raw amino-acid sequence, 120 residues long: U13-lycotoxin-Ls1a (120 aa).

An N-terminal signal peptide occupies residues 1–16; sequence MKTLFVLISILYAVYC. Residues 17–54 constitute a propeptide that is removed on maturation; it reads FSSEEDVDSAYLANELEPVEDINSEQYAALEPKEEQER. 4 disulfides stabilise this stretch: C56–C70, C63–C76, C69–C87, and C78–C85. The Agouti domain maps to 56 to 95; the sequence is CADMGQDCKDDCDCCLNIATCNCWFGRYFCSCTFGDYQTC.

It belongs to the neurotoxin 05 (agouti) family. Post-translationally, contains 6 disulfide bonds. In terms of tissue distribution, expressed by the venom gland.

Its subcellular location is the secreted. The polypeptide is U13-lycotoxin-Ls1a (Lycosa singoriensis (Wolf spider)).